The following is a 372-amino-acid chain: Anhydro-N-acetylmuramic acid kinase (372 aa).

ATP is bound at residue glycine 12–aspartate 19.

The protein belongs to the anhydro-N-acetylmuramic acid kinase family.

The enzyme catalyses 1,6-anhydro-N-acetyl-beta-muramate + ATP + H2O = N-acetyl-D-muramate 6-phosphate + ADP + H(+). It functions in the pathway amino-sugar metabolism; 1,6-anhydro-N-acetylmuramate degradation. It participates in cell wall biogenesis; peptidoglycan recycling. Functionally, catalyzes the specific phosphorylation of 1,6-anhydro-N-acetylmuramic acid (anhMurNAc) with the simultaneous cleavage of the 1,6-anhydro ring, generating MurNAc-6-P. Is required for the utilization of anhMurNAc either imported from the medium or derived from its own cell wall murein, and thus plays a role in cell wall recycling. The sequence is that of Anhydro-N-acetylmuramic acid kinase from Coxiella burnetii (strain CbuK_Q154) (Coxiella burnetii (strain Q154)).